The primary structure comprises 333 residues: Viral cathepsin (333 aa).

Positions 1–20 (MTKLLNFVILASVLTVTAHA) are cleaved as a signal peptide. Residues 21-124 (LTYDLNNSDE…VIKDEPQALL (104 aa)) constitute a propeptide, activation peptide. 3 cysteine pairs are disulfide-bonded: Cys145/Cys186, Cys179/Cys219, and Cys272/Cys321. Cys148 is an active-site residue. N-linked (GlcNAc...) asparagine; by host glycosylation is present at Asn170. Residues His280 and Asn300 contribute to the active site.

The protein belongs to the peptidase C1 family. In terms of processing, synthesized as an inactive proenzyme and activated by proteolytic removal of the inhibitory propeptide.

It carries out the reaction Endopeptidase of broad specificity, hydrolyzing substrates of both cathepsin L and cathepsin B.. Cysteine protease that plays an essential role in host liquefaction to facilitate horizontal transmission of the virus. May participate in the degradation of foreign protein expressed by the baculovirus system. This is Viral cathepsin (VCATH) from Cydia pomonella granulosis virus (isolate Mexico/1963) (CpGV).